The primary structure comprises 247 residues: ATP synthase subunit a, chloroplastic (247 aa).

5 consecutive transmembrane segments (helical) span residues 38–58 (QVLITSWVVITILLGSVLIAV), 95–115 (VPFIGTMFLFIFVSNWSGALL), 134–154 (INTTVALALLTSAAYFYAGLS), 199–219 (LVVVVLVSLVPLVVPIPVMFL), and 220–240 (GLFTSGIQALIFATLAAAYIG).

Belongs to the ATPase A chain family. In terms of assembly, F-type ATPases have 2 components, CF(1) - the catalytic core - and CF(0) - the membrane proton channel. CF(1) has five subunits: alpha(3), beta(3), gamma(1), delta(1), epsilon(1). CF(0) has four main subunits: a, b, b' and c.

The protein resides in the plastid. It is found in the chloroplast thylakoid membrane. In terms of biological role, key component of the proton channel; it plays a direct role in the translocation of protons across the membrane. This chain is ATP synthase subunit a, chloroplastic, found in Brachypodium distachyon (Purple false brome).